Consider the following 560-residue polypeptide: 2-succinyl-5-enolpyruvyl-6-hydroxy-3-cyclohexene-1-carboxylate synthase (560 aa).

The protein belongs to the TPP enzyme family. MenD subfamily. As to quaternary structure, homodimer. Requires Mg(2+) as cofactor. It depends on Mn(2+) as a cofactor. Thiamine diphosphate is required as a cofactor.

It carries out the reaction isochorismate + 2-oxoglutarate + H(+) = 5-enolpyruvoyl-6-hydroxy-2-succinyl-cyclohex-3-ene-1-carboxylate + CO2. It functions in the pathway quinol/quinone metabolism; 1,4-dihydroxy-2-naphthoate biosynthesis; 1,4-dihydroxy-2-naphthoate from chorismate: step 2/7. Its pathway is quinol/quinone metabolism; menaquinone biosynthesis. Functionally, catalyzes the thiamine diphosphate-dependent decarboxylation of 2-oxoglutarate and the subsequent addition of the resulting succinic semialdehyde-thiamine pyrophosphate anion to isochorismate to yield 2-succinyl-5-enolpyruvyl-6-hydroxy-3-cyclohexene-1-carboxylate (SEPHCHC). The chain is 2-succinyl-5-enolpyruvyl-6-hydroxy-3-cyclohexene-1-carboxylate synthase from Pectobacterium atrosepticum (strain SCRI 1043 / ATCC BAA-672) (Erwinia carotovora subsp. atroseptica).